The following is a 429-amino-acid chain: Ribosomal RNA small subunit methyltransferase B (429 aa).

Residues 254 to 260 (CAAPGGK), D277, D303, and D322 each bind S-adenosyl-L-methionine. C375 serves as the catalytic Nucleophile.

This sequence belongs to the class I-like SAM-binding methyltransferase superfamily. RsmB/NOP family.

It is found in the cytoplasm. It carries out the reaction cytidine(967) in 16S rRNA + S-adenosyl-L-methionine = 5-methylcytidine(967) in 16S rRNA + S-adenosyl-L-homocysteine + H(+). In terms of biological role, specifically methylates the cytosine at position 967 (m5C967) of 16S rRNA. The sequence is that of Ribosomal RNA small subunit methyltransferase B from Shigella sonnei (strain Ss046).